Reading from the N-terminus, the 1409-residue chain is DNA-directed RNA polymerase subunit beta' (1409 aa).

Positions 69, 71, 84, and 87 each coordinate Zn(2+). Residues Asp461, Asp463, and Asp465 each coordinate Mg(2+). Positions 805, 879, 886, and 889 each coordinate Zn(2+).

It belongs to the RNA polymerase beta' chain family. As to quaternary structure, the RNAP catalytic core consists of 2 alpha, 1 beta, 1 beta' and 1 omega subunit. When a sigma factor is associated with the core the holoenzyme is formed, which can initiate transcription. The cofactor is Mg(2+). Zn(2+) serves as cofactor.

The catalysed reaction is RNA(n) + a ribonucleoside 5'-triphosphate = RNA(n+1) + diphosphate. Functionally, DNA-dependent RNA polymerase catalyzes the transcription of DNA into RNA using the four ribonucleoside triphosphates as substrates. This Anaplasma phagocytophilum (strain HZ) protein is DNA-directed RNA polymerase subunit beta'.